A 384-amino-acid polypeptide reads, in one-letter code: Queuine tRNA-ribosyltransferase (384 aa).

The active-site Proton acceptor is D92. Substrate is bound by residues 92 to 96 (DSGGF), D146, Q190, and G217. The segment at 248 to 254 (GVGRPED) is RNA binding. D267 functions as the Nucleophile in the catalytic mechanism. Residues 272–276 (TRHAR) form an RNA binding; important for wobble base 34 recognition region. Zn(2+)-binding residues include C305, C307, C310, and H337.

The protein belongs to the queuine tRNA-ribosyltransferase family. As to quaternary structure, homodimer. Within each dimer, one monomer is responsible for RNA recognition and catalysis, while the other monomer binds to the replacement base PreQ1. It depends on Zn(2+) as a cofactor.

The catalysed reaction is 7-aminomethyl-7-carbaguanine + guanosine(34) in tRNA = 7-aminomethyl-7-carbaguanosine(34) in tRNA + guanine. Its pathway is tRNA modification; tRNA-queuosine biosynthesis. In terms of biological role, catalyzes the base-exchange of a guanine (G) residue with the queuine precursor 7-aminomethyl-7-deazaguanine (PreQ1) at position 34 (anticodon wobble position) in tRNAs with GU(N) anticodons (tRNA-Asp, -Asn, -His and -Tyr). Catalysis occurs through a double-displacement mechanism. The nucleophile active site attacks the C1' of nucleotide 34 to detach the guanine base from the RNA, forming a covalent enzyme-RNA intermediate. The proton acceptor active site deprotonates the incoming PreQ1, allowing a nucleophilic attack on the C1' of the ribose to form the product. After dissociation, two additional enzymatic reactions on the tRNA convert PreQ1 to queuine (Q), resulting in the hypermodified nucleoside queuosine (7-(((4,5-cis-dihydroxy-2-cyclopenten-1-yl)amino)methyl)-7-deazaguanosine). The polypeptide is Queuine tRNA-ribosyltransferase (Xylella fastidiosa (strain 9a5c)).